A 218-amino-acid polypeptide reads, in one-letter code: MKTIANESFLLDTKVPEPTLRRLPWYLSYVQLLHADGCESVSSTRIARAVGVDASLVAKDLSYVSVDGRTRVGYRVADMVAVLNDFLGFTHHHRAFLFGVGSLGAALLQDSGLRHFGLEIAAGFDVNPDIVDTNINGIPVYHKSRVAELCARERVDIGILTVPIRAAQSMADEMIAAGIKAIWNFTPWRISVPEGVVVQNTSMYAQLAVMFNRMKSLP.

Residues 25-64 constitute a DNA-binding region (H-T-H motif); it reads WYLSYVQLLHADGCESVSSTRIARAVGVDASLVAKDLSYV. NAD(+) is bound at residue 99 to 104; sequence GVGSLG.

It belongs to the transcriptional regulatory Rex family. As to quaternary structure, homodimer.

Its subcellular location is the cytoplasm. Modulates transcription in response to changes in cellular NADH/NAD(+) redox state. This chain is Redox-sensing transcriptional repressor Rex, found in Porphyromonas gingivalis (strain ATCC BAA-308 / W83).